A 308-amino-acid polypeptide reads, in one-letter code: Ribonuclease Z (308 aa).

Zn(2+)-binding residues include His61, His63, Asp65, His66, His139, Asp210, and His268. Asp65 functions as the Proton acceptor in the catalytic mechanism.

The protein belongs to the RNase Z family. As to quaternary structure, homodimer. The cofactor is Zn(2+).

It carries out the reaction Endonucleolytic cleavage of RNA, removing extra 3' nucleotides from tRNA precursor, generating 3' termini of tRNAs. A 3'-hydroxy group is left at the tRNA terminus and a 5'-phosphoryl group is left at the trailer molecule.. Zinc phosphodiesterase, which displays some tRNA 3'-processing endonuclease activity. Probably involved in tRNA maturation, by removing a 3'-trailer from precursor tRNA. This is Ribonuclease Z from Natronomonas pharaonis (strain ATCC 35678 / DSM 2160 / CIP 103997 / JCM 8858 / NBRC 14720 / NCIMB 2260 / Gabara) (Halobacterium pharaonis).